The chain runs to 708 residues: Metabotropic glutamate receptor-like protein L (708 aa).

The signal sequence occupies residues 1–24; the sequence is MKLIIKNLILLLVSCLYFLSNVSC. Asparagine 21, asparagine 235, asparagine 310, and asparagine 366 each carry an N-linked (GlcNAc...) asparagine glycan. The Extracellular portion of the chain corresponds to 25–370; sequence DQEVHMALLL…TTGSINKTFM (346 aa). Residues 371–391 form a helical membrane-spanning segment; that stretch reads AVSILEMAICLIIGIIVIFFF. Topologically, residues 392 to 401 are cytoplasmic; it reads SRNINIIYST. The helical transmembrane segment at 402–422 threads the bilayer; it reads IPYCLTILLGASLIAVAIFLW. Topologically, residues 423–435 are extracellular; it reads NLRDLNTQICTSK. Residues 436 to 456 traverse the membrane as a helical segment; that stretch reads IWMASLGYNVLIGFIIIKSSL. The Cytoplasmic segment spans residues 457 to 479; sequence IYFKFKEMVKSKNEKISPIPFGR. A helical membrane pass occupies residues 480 to 500; that stretch reads IVLWFVPLLIIDCVLLIIYST. At 501 to 531 the chain is on the extracellular side; that stretch reads SGNPGKIDSLGLDGIGRYEYTQNCVNNLTGD. An N-linked (GlcNAc...) asparagine glycan is attached at asparagine 527. The chain crosses the membrane as a helical span at residues 532-552; the sequence is IILYIILVFHGLQLLYGCVIA. At 553 to 568 the chain is on the cytoplasmic side; that stretch reads WKTRVIDLEEFIEAHD. Residues 569–589 form a helical membrane-spanning segment; the sequence is FATAIYLITFCSFIIVILMVG. The Extracellular segment spans residues 590-597; it reads VTSTSNRN. A helical membrane pass occupies residues 598–618; the sequence is TIISACAIFSSFSCVLIIFGA. Residues 619-708 are Cytoplasmic-facing; the sequence is KFWKIYKPVE…SSRAAAQNDN (90 aa). Residues 638 to 681 form a disordered region; it reads KPQKSYSGSGGSGNSSGSKSKKTSAHSSTSGVKSGTSAPTQTSQ. A compositionally biased stretch (polar residues) spans 669 to 681; the sequence is VKSGTSAPTQTSQ.

The protein in the N-terminal section; belongs to the BMP lipoprotein family. It in the C-terminal section; belongs to the G-protein coupled receptor 3 family. GABA-B receptor subfamily.

The protein localises to the membrane. The sequence is that of Metabotropic glutamate receptor-like protein L (far1) from Dictyostelium discoideum (Social amoeba).